The primary structure comprises 281 residues: Bifunctional protein FolD (281 aa).

Position 163–165 (163–165 (GRS)) interacts with NADP(+).

The protein belongs to the tetrahydrofolate dehydrogenase/cyclohydrolase family. In terms of assembly, homodimer.

The enzyme catalyses (6R)-5,10-methylene-5,6,7,8-tetrahydrofolate + NADP(+) = (6R)-5,10-methenyltetrahydrofolate + NADPH. It catalyses the reaction (6R)-5,10-methenyltetrahydrofolate + H2O = (6R)-10-formyltetrahydrofolate + H(+). It participates in one-carbon metabolism; tetrahydrofolate interconversion. In terms of biological role, catalyzes the oxidation of 5,10-methylenetetrahydrofolate to 5,10-methenyltetrahydrofolate and then the hydrolysis of 5,10-methenyltetrahydrofolate to 10-formyltetrahydrofolate. The polypeptide is Bifunctional protein FolD (Leuconostoc mesenteroides subsp. mesenteroides (strain ATCC 8293 / DSM 20343 / BCRC 11652 / CCM 1803 / JCM 6124 / NCDO 523 / NBRC 100496 / NCIMB 8023 / NCTC 12954 / NRRL B-1118 / 37Y)).